The primary structure comprises 332 residues: Ribosomal RNA small subunit methyltransferase C (332 aa).

This sequence belongs to the methyltransferase superfamily. RsmC family. In terms of assembly, monomer.

The protein localises to the cytoplasm. The enzyme catalyses guanosine(1207) in 16S rRNA + S-adenosyl-L-methionine = N(2)-methylguanosine(1207) in 16S rRNA + S-adenosyl-L-homocysteine + H(+). Functionally, specifically methylates the guanine in position 1207 of 16S rRNA in the 30S particle. The sequence is that of Ribosomal RNA small subunit methyltransferase C from Pseudomonas syringae pv. tomato (strain ATCC BAA-871 / DC3000).